Here is an 879-residue protein sequence, read N- to C-terminus: MGSLPQLSIVKGLQQDFVPRALHRIFEEQQLRHADKVALIYQPSTTGQGMAPSQSSYRQMNERANRAARLLVAETHGRFLQPNSDGDFIVAVCMQPSEGLVTTLLAIWKAGGAYLPIDPSFPANRIHHILLEAKPTLVIRDDDIDAGRFQGTPTLSTTELYAKSLQLAGSNLLSEEMLRGGNDHIAIVLYTSGSTGVPKGVRLPHESILNRLQWQWATFPYTANEAVSVFKTALTFVDSIAELWGPLMCGLAILVVPKAVTKDPQRLVALLERYKIRRLVLVPTLLRSLLMYLKMEGGGAAQKLLYNLQIWVCSGEPLSVSLASSFFDYFDEGVHRLYNFYGSTEVLGDVTYFACESKKQLSLYDNVPIGIPLSNTVVYLLDADYRPVKNGEIGEIFASGLNLAAGYVNGRDPERFLENPLAVEKKYARLYRTGDYGSLKNGSIMYEGRTDSQVKIRGHRVDLSEVEKNVAELPLVDKAIVLCYHAGQVDQAILAFVKLRDDAPMVTEMQMEARLKDKLADYMTPQVVILEHVPLLVNGKVDRQALLKTYETANNNEGDSSIVLDFDYSQVPEDLKLTARDLFETVGGVIGRSTRATLAPHSNFYELGGNSLNSIFTVTLLREKGYNIGISEFIAAKNLGEIIEKMAANHDAVQLEEESLNACPHLKMEAVPLRLEHRQEVIDIIVASFYNKADLEQWLKPGVLRTDYSDILNDIWNVLVERDLSFVVYDTNTDRIIGTALNFDARNEPEVDIKSKLLIVFEFLEFCEGPIRDNYLPKGLNQILHSFMMGTAEKLNPRENIACMHFMEHEVLRVAREKQFAGIFTTNTSPLTQQLADVYHYKTLLNFQVNEYVHSDGSRPFGDAPDEQRAIVHWKEVGK.

An adenylation region spans residues 26–540 (FEEQQLRHAD…EHVPLLVNGK (515 aa)). One can recognise a Carrier domain in the interval 573–650 (EDLKLTARDL…EIIEKMAANH (78 aa)). Ser-611 bears the O-(pantetheine 4'-phosphoryl)serine mark. The tract at residues 666 to 679 (LKMEAVPLRLEHRQ) is condensation. Glu-696 serves as a coordination point for dopamine. Position 696 (Glu-696) interacts with histamine. Beta-alanine-binding residues include Thr-825 and Asn-827.

It belongs to the NRP synthetase family. Requires pantetheine 4'-phosphate as cofactor. The cofactor is Mg(2+). Expressed in the optic neuropils in the lamina and in distinct cells at the distal border of the medulla cortex (at protein level). Expressed in the protocerebrum and thoracic ganglia (at protein level). Expressed in antennal lobes, antennal nerves and subesophagic ganglion (at protein level). Specifically, expressed in epithelial glial cells of the medulla that surround the synaptic cleft of photoreceptor axonal endings (at protein level). Expressed in some cells in the cuticle.

It is found in the cytoplasm. It carries out the reaction histamine + beta-alanine + ATP = carcinine + AMP + diphosphate + H(+). The enzyme catalyses beta-alanine + ATP + H(+) = beta-alanyl-5'-AMP + diphosphate. The catalysed reaction is beta-alanyl-5'-AMP + holo-[peptidyl-carrier protein] = beta-alanyl-[peptidyl-carrier protein] + AMP + H(+). It catalyses the reaction beta-alanyl-[peptidyl-carrier protein] + histamine = carcinine + holo-[peptidyl-carrier protein] + H(+). It carries out the reaction dopamine + beta-alanine + ATP = beta-alanyl-dopamine + AMP + diphosphate + H(+). The enzyme catalyses beta-alanyl-[peptidyl-carrier protein] + dopamine = beta-alanyl-dopamine + holo-[peptidyl-carrier protein] + H(+). Nonribosomal peptide synthase which is required for the regulation of histamine and dopamine levels in various tissues through their condensation with beta-alanine. In epithelial glial cells, plays an essential role in the inactivation of histamine, the main neurotransmitter in the optical nerve system, by catalyzing the conversion of histamine into carcinine. In the cuticle, catalyzes the condensation of beta-alanine with dopamine to form beta-alanyl-dopamine (NBAD), a metabolite involved in the pigmentation and sclerotization of the insect cuticle. Also, regulates the cuticular hydrocarbon composition in females. Acts downstream of the body clock to regulate circadian behavioral rhythms. Can also condense beta-alanine with biogenic amines tyramine, octopamine, and serotonin in vitro. This is Beta-alanyl-bioamine nonribosomal peptide synthetase ebony from Drosophila melanogaster (Fruit fly).